We begin with the raw amino-acid sequence, 133 residues long: Small ribosomal subunit protein uS8 (133 aa).

This sequence belongs to the universal ribosomal protein uS8 family. Part of the 30S ribosomal subunit. Contacts proteins S5 and S12.

Functionally, one of the primary rRNA binding proteins, it binds directly to 16S rRNA central domain where it helps coordinate assembly of the platform of the 30S subunit. The chain is Small ribosomal subunit protein uS8 from Prochlorococcus marinus (strain MIT 9312).